The primary structure comprises 333 residues: Protein farnesyltransferase/geranylgeranyltransferase type-1 subunit alpha (333 aa).

PFTA repeat units lie at residues 61-95, 96-130, 132-166, 167-200, and 207-241; these read LSSR…SLKV, DLHV…KLGP, ARNS…NLGG, WEDE…RSPV, and MRES…DEST.

This sequence belongs to the protein prenyltransferase subunit alpha family. As to quaternary structure, heterodimer of FTA and FTB (farnesyltransferase). Heterodimer of an alpha and a beta subunit. The cofactor is Mg(2+).

The catalysed reaction is L-cysteinyl-[protein] + (2E,6E)-farnesyl diphosphate = S-(2E,6E)-farnesyl-L-cysteinyl-[protein] + diphosphate. It carries out the reaction geranylgeranyl diphosphate + L-cysteinyl-[protein] = S-geranylgeranyl-L-cysteinyl-[protein] + diphosphate. Functionally, essential subunit of both the farnesyltransferase and the geranylgeranyltransferase complex. Contributes to the transfer of a farnesyl or geranylgeranyl moiety from farnesyl or geranylgeranyl diphosphate to a cysteine at the fourth position from the C-terminus of several proteins having the C-terminal sequence Cys-aliphatic-aliphatic-X. The polypeptide is Protein farnesyltransferase/geranylgeranyltransferase type-1 subunit alpha (FTA) (Pisum sativum (Garden pea)).